Reading from the N-terminus, the 254-residue chain is Imidazole glycerol phosphate synthase subunit HisF (254 aa).

Catalysis depends on residues D11 and D130.

Belongs to the HisA/HisF family. As to quaternary structure, heterodimer of HisH and HisF.

The protein resides in the cytoplasm. The enzyme catalyses 5-[(5-phospho-1-deoxy-D-ribulos-1-ylimino)methylamino]-1-(5-phospho-beta-D-ribosyl)imidazole-4-carboxamide + L-glutamine = D-erythro-1-(imidazol-4-yl)glycerol 3-phosphate + 5-amino-1-(5-phospho-beta-D-ribosyl)imidazole-4-carboxamide + L-glutamate + H(+). Its pathway is amino-acid biosynthesis; L-histidine biosynthesis; L-histidine from 5-phospho-alpha-D-ribose 1-diphosphate: step 5/9. Its function is as follows. IGPS catalyzes the conversion of PRFAR and glutamine to IGP, AICAR and glutamate. The HisF subunit catalyzes the cyclization activity that produces IGP and AICAR from PRFAR using the ammonia provided by the HisH subunit. This chain is Imidazole glycerol phosphate synthase subunit HisF, found in Trichlorobacter lovleyi (strain ATCC BAA-1151 / DSM 17278 / SZ) (Geobacter lovleyi).